The chain runs to 96 residues: UPF0251 protein Spea_3639 (96 aa).

Belongs to the UPF0251 family.

This Shewanella pealeana (strain ATCC 700345 / ANG-SQ1) protein is UPF0251 protein Spea_3639.